The following is a 255-amino-acid chain: Aliphatic sulfonates import ATP-binding protein SsuB (255 aa).

Positions 12-233 (LLLNAVSKHY…RLGSVRLAEL (222 aa)) constitute an ABC transporter domain. 44-51 (GRSGGGKS) is a binding site for ATP.

It belongs to the ABC transporter superfamily. Aliphatic sulfonates importer (TC 3.A.1.17.2) family. As to quaternary structure, the complex is composed of two ATP-binding proteins (SsuB), two transmembrane proteins (SsuC) and a solute-binding protein (SsuA).

Its subcellular location is the cell inner membrane. It catalyses the reaction ATP + H2O + aliphatic sulfonate-[sulfonate-binding protein]Side 1 = ADP + phosphate + aliphatic sulfonateSide 2 + [sulfonate-binding protein]Side 1.. Part of the ABC transporter complex SsuABC involved in aliphatic sulfonates import. Responsible for energy coupling to the transport system. The polypeptide is Aliphatic sulfonates import ATP-binding protein SsuB (Escherichia coli O6:H1 (strain CFT073 / ATCC 700928 / UPEC)).